Reading from the N-terminus, the 145-residue chain is MFKEFKEFIARGNVIDLAVGIIIGAAFTAIVNSLVADLINPIIGLLTGGTDFSGHYLVLKGEVPPGASLQVARDSGASVFAYGAFLSAVINFLIIAWAVFLLVKAVNRVQSAASRQKEAEAEAAAGPTQEELLTEIRDELRARRT.

The next 2 membrane-spanning stretches (helical) occupy residues 14 to 34 (VIDL…VNSL) and 83 to 103 (GAFL…FLLV).

This sequence belongs to the MscL family. Homopentamer.

Its subcellular location is the cell inner membrane. In terms of biological role, channel that opens in response to stretch forces in the membrane lipid bilayer. May participate in the regulation of osmotic pressure changes within the cell. The protein is Large-conductance mechanosensitive channel of Paracoccus denitrificans (strain Pd 1222).